We begin with the raw amino-acid sequence, 378 residues long: Queuine tRNA-ribosyltransferase (378 aa).

The active-site Proton acceptor is Asp-91. Substrate is bound by residues Asp-91–Phe-95, Asp-145, Gln-189, and Gly-216. Positions Gly-247–Asp-253 are RNA binding. Asp-266 acts as the Nucleophile in catalysis. Residues Thr-271 to Arg-275 are RNA binding; important for wobble base 34 recognition. Zn(2+) contacts are provided by Cys-304, Cys-306, Cys-309, and His-335.

This sequence belongs to the queuine tRNA-ribosyltransferase family. As to quaternary structure, homodimer. Within each dimer, one monomer is responsible for RNA recognition and catalysis, while the other monomer binds to the replacement base PreQ1. It depends on Zn(2+) as a cofactor.

The catalysed reaction is 7-aminomethyl-7-carbaguanine + guanosine(34) in tRNA = 7-aminomethyl-7-carbaguanosine(34) in tRNA + guanine. It participates in tRNA modification; tRNA-queuosine biosynthesis. Functionally, catalyzes the base-exchange of a guanine (G) residue with the queuine precursor 7-aminomethyl-7-deazaguanine (PreQ1) at position 34 (anticodon wobble position) in tRNAs with GU(N) anticodons (tRNA-Asp, -Asn, -His and -Tyr). Catalysis occurs through a double-displacement mechanism. The nucleophile active site attacks the C1' of nucleotide 34 to detach the guanine base from the RNA, forming a covalent enzyme-RNA intermediate. The proton acceptor active site deprotonates the incoming PreQ1, allowing a nucleophilic attack on the C1' of the ribose to form the product. After dissociation, two additional enzymatic reactions on the tRNA convert PreQ1 to queuine (Q), resulting in the hypermodified nucleoside queuosine (7-(((4,5-cis-dihydroxy-2-cyclopenten-1-yl)amino)methyl)-7-deazaguanosine). This Vibrio campbellii (strain ATCC BAA-1116) protein is Queuine tRNA-ribosyltransferase.